The primary structure comprises 464 residues: Cysteine--tRNA ligase (464 aa).

A Zn(2+)-binding site is contributed by C28. The 'HIGH' region signature appears at 30–40; sequence PTVYDHSHIGH. Zn(2+) is bound by residues C205, H230, and E234. The 'KMSKS' region motif lies at 263–267; it reads KMSKS. K266 serves as a coordination point for ATP.

This sequence belongs to the class-I aminoacyl-tRNA synthetase family. It depends on Zn(2+) as a cofactor.

Its subcellular location is the cytoplasm. The enzyme catalyses tRNA(Cys) + L-cysteine + ATP = L-cysteinyl-tRNA(Cys) + AMP + diphosphate. The sequence is that of Cysteine--tRNA ligase from Ignicoccus hospitalis (strain KIN4/I / DSM 18386 / JCM 14125).